We begin with the raw amino-acid sequence, 89 residues long: Acylphosphatase (89 aa).

The Acylphosphatase-like domain occupies 3-89; that stretch reads ALEIYVSGNV…ENYESFEVAY (87 aa). Residues R18 and N36 contribute to the active site.

The protein belongs to the acylphosphatase family.

The enzyme catalyses an acyl phosphate + H2O = a carboxylate + phosphate + H(+). The protein is Acylphosphatase (acyP) of Archaeoglobus fulgidus (strain ATCC 49558 / DSM 4304 / JCM 9628 / NBRC 100126 / VC-16).